The chain runs to 348 residues: Uroporphyrinogen decarboxylase (348 aa).

Substrate-binding positions include 28-32 (RQAGR), Asp-78, Tyr-154, Thr-209, and His-325.

Belongs to the uroporphyrinogen decarboxylase family. In terms of assembly, homodimer.

It is found in the cytoplasm. It catalyses the reaction uroporphyrinogen III + 4 H(+) = coproporphyrinogen III + 4 CO2. The protein operates within porphyrin-containing compound metabolism; protoporphyrin-IX biosynthesis; coproporphyrinogen-III from 5-aminolevulinate: step 4/4. Functionally, catalyzes the decarboxylation of four acetate groups of uroporphyrinogen-III to yield coproporphyrinogen-III. The chain is Uroporphyrinogen decarboxylase from Rhodopseudomonas palustris (strain HaA2).